A 277-amino-acid chain; its full sequence is Probable endonuclease 4 (277 aa).

Histidine 70, histidine 108, glutamate 143, aspartate 176, histidine 179, histidine 210, aspartate 223, histidine 225, and glutamate 255 together coordinate Zn(2+).

The protein belongs to the AP endonuclease 2 family. Zn(2+) is required as a cofactor.

The enzyme catalyses Endonucleolytic cleavage to 5'-phosphooligonucleotide end-products.. In terms of biological role, endonuclease IV plays a role in DNA repair. It cleaves phosphodiester bonds at apurinic or apyrimidinic (AP) sites, generating a 3'-hydroxyl group and a 5'-terminal sugar phosphate. The sequence is that of Probable endonuclease 4 from Mycoplasmopsis synoviae (strain 53) (Mycoplasma synoviae).